The chain runs to 501 residues: Sarpagan bridge enzyme (501 aa).

Residues 3 to 23 (VMQLSFSYPALFLFVFFLFML) form a helical; Signal-anchor for type II membrane protein membrane-spanning segment. Residue Cys-441 coordinates heme.

Belongs to the cytochrome P450 family. Requires heme as cofactor. In terms of tissue distribution, highly expressed in roots. Expressed at low levels in stems.

It is found in the endoplasmic reticulum membrane. The catalysed reaction is (19E)-geissoschizine + reduced [NADPH--hemoprotein reductase] + O2 = polyneuridine aldehyde + oxidized [NADPH--hemoprotein reductase] + 2 H2O + H(+). The enzyme catalyses tetrahydroalstonine + A + reduced [NADPH--hemoprotein reductase] + O2 = alstonine + AH2 + oxidized [NADPH--hemoprotein reductase] + 2 H2O + H(+). It carries out the reaction ajmalicine + A + reduced [NADPH--hemoprotein reductase] + O2 = serpentine + AH2 + oxidized [NADPH--hemoprotein reductase] + 2 H2O + H(+). Its pathway is alkaloid biosynthesis; ajmaline biosynthesis. In terms of biological role, monooxygenase involved in the biosynthesis of ajmaline-type monoterpenoid indole alkaloids (MIAs) natural products, important plant-derived pharmaceuticals used in the therapy of heart disorders. Converts by cyclization the strictosidine-derived geissoschizine to the sarpagan alkaloid polyneuridine aldehyde, precursor of vomilenine, an intermediate chemical in the biosynthesis of ajmaline. Converts by aromatization the tetrahydro-beta-carboline alkaloids tetrahydroalstonine and ajmalicine to the corresponding beta-carboline alkaloids alstonine and serpentine, respectively. The chain is Sarpagan bridge enzyme from Gelsemium sempervirens (Carolina jasmine).